The primary structure comprises 233 residues: Esterase FUS5 (233 aa).

Active-site charge relay system residues include Ser105, Asp159, and His187.

It belongs to the LovG family.

In terms of biological role, esterase; part of the gene cluster that mediates the biosynthesis of the mycotoxin fusarin C. Within the cluster, FUS1, FUS2, FUS8 and FUS9 are sufficient for fusarin production. The other FUS cluster members are not essential for fusarin C biosynthesis. This chain is Esterase FUS5, found in Gibberella moniliformis (strain M3125 / FGSC 7600) (Maize ear and stalk rot fungus).